The following is a 152-amino-acid chain: Large ribosomal subunit protein uL22 (152 aa).

Over residues 124–145 the composition is skewed to low complexity; the sequence is APKKAAAKKAAPAKETTPAATE. Residues 124–152 are disordered; sequence APKKAAAKKAAPAKETTPAATESKTEGAE.

This sequence belongs to the universal ribosomal protein uL22 family. As to quaternary structure, part of the 50S ribosomal subunit.

Functionally, this protein binds specifically to 23S rRNA; its binding is stimulated by other ribosomal proteins, e.g. L4, L17, and L20. It is important during the early stages of 50S assembly. It makes multiple contacts with different domains of the 23S rRNA in the assembled 50S subunit and ribosome. Its function is as follows. The globular domain of the protein is located near the polypeptide exit tunnel on the outside of the subunit, while an extended beta-hairpin is found that lines the wall of the exit tunnel in the center of the 70S ribosome. This is Large ribosomal subunit protein uL22 from Salinispora tropica (strain ATCC BAA-916 / DSM 44818 / JCM 13857 / NBRC 105044 / CNB-440).